The primary structure comprises 119 residues: MPFPVPDPFVWDTSFQVFYFELDEKHRGIFQALFALGNDNNPSNLKLLYRVTANHFAEEEGFMQTANYGGYRSHKVLHEDFLAKLRSFKAPVPDKDVYFAKDWLVQHIKTIDFKYKNLL.

Fe cation contacts are provided by H26, H55, E59, H74, H78, H107, and D112.

Belongs to the hemerythrin family.

Functionally, hemerythrin is a respiratory protein in blood cells of certain marine worms. The oxygen-binding site in each chain contains two iron atoms. The protein is Hemerythrin subunit A of Sipunculus nudus (Sipunculan worm).